The primary structure comprises 399 residues: Phosphatidate cytidylyltransferase 5, chloroplastic (399 aa).

The N-terminal 26 residues, 1–26 (MAPFVEVCRYKPLPLSLSSLCTCPCR), are a transit peptide targeting the chloroplast. 6 helical membrane-spanning segments follow: residues 123–143 (VGGI…AAVL), 187–207 (FGHI…ALLL), 217–237 (LSST…WVKL), 266–286 (VGLV…TFAF), 309–329 (AFAG…SLSW), and 333–353 (LVST…GDLT).

It belongs to the CDS family. Requires Mg(2+) as cofactor.

It localises to the plastid. Its subcellular location is the chloroplast membrane. The enzyme catalyses a 1,2-diacyl-sn-glycero-3-phosphate + CTP + H(+) = a CDP-1,2-diacyl-sn-glycerol + diphosphate. The protein operates within phospholipid metabolism; CDP-diacylglycerol biosynthesis; CDP-diacylglycerol from sn-glycerol 3-phosphate: step 3/3. Highest activities is obtained at about 30 mM CTP and 2 mM phosphatidic acid (PA). In terms of biological role, may be involved in the synthesis of minor phospholipids and in modulation of IP3-mediated signal transduction. Promotes the biosynthesis of plastidial phosphatidylglycerol (PG) which is required for structure and function of thylakoid membranes and, hence, for photoautotrophic growth. This Arabidopsis thaliana (Mouse-ear cress) protein is Phosphatidate cytidylyltransferase 5, chloroplastic.